We begin with the raw amino-acid sequence, 447 residues long: Elongation factor 1-alpha (447 aa).

The region spanning 5-230 is the tr-type G domain; sequence KIHISIVVIG…DQINEPKRPS (226 aa). The interval 14–21 is G1; the sequence is GHVDSGKS. Residue 14-21 participates in GTP binding; the sequence is GHVDSGKS. Lys55 bears the N6,N6-dimethyllysine mark. The interval 70–74 is G2; the sequence is GITID. Residue Lys79 is modified to N6,N6,N6-trimethyllysine. Residues 91–94 are G3; that stretch reads DAPG. GTP contacts are provided by residues 91–95 and 153–156; these read DAPGH and NKMD. A G4 region spans residues 153-156; that stretch reads NKMD. The residue at position 187 (Lys187) is an N6,N6,N6-trimethyllysine. The interval 194 to 196 is G5; that stretch reads SGF. N6-methyllysine is present on Lys261. The residue at position 289 (Glu289) is a 5-glutamyl glycerylphosphorylethanolamine. Lys306 carries the N6,N6,N6-trimethyllysine modification. Glu362 carries the post-translational modification 5-glutamyl glycerylphosphorylethanolamine. At Lys396 the chain carries N6,N6,N6-trimethyllysine.

Belongs to the TRAFAC class translation factor GTPase superfamily. Classic translation factor GTPase family. EF-Tu/EF-1A subfamily.

The protein localises to the cytoplasm. Its function is as follows. This protein promotes the GTP-dependent binding of aminoacyl-tRNA to the A-site of ribosomes during protein biosynthesis. This is Elongation factor 1-alpha (BLT63) from Hordeum vulgare (Barley).